The sequence spans 203 residues: Thymidylate kinase (203 aa).

ATP is bound at residue 10-17; that stretch reads GVEGSGKT.

It belongs to the thymidylate kinase family.

It carries out the reaction dTMP + ATP = dTDP + ADP. Phosphorylation of dTMP to form dTDP in both de novo and salvage pathways of dTTP synthesis. The protein is Thymidylate kinase of Carboxydothermus hydrogenoformans (strain ATCC BAA-161 / DSM 6008 / Z-2901).